A 227-amino-acid chain; its full sequence is Cytochrome c oxidase subunit 2 (227 aa).

Over 1–14 the chain is Mitochondrial intermembrane; that stretch reads MAYPMQLGFQDATS. A helical membrane pass occupies residues 15–45; it reads PIMEELLHFHDHTLMIVFLISSLVLYIISLM. Residues 46–59 lie on the Mitochondrial matrix side of the membrane; it reads LTTKLTHTSTMDAQ. The chain crosses the membrane as a helical span at residues 60-87; that stretch reads EVETVWTILPAIILIMIALPSLRILYMM. Residues 88-227 are Mitochondrial intermembrane-facing; that stretch reads DEINNPSLTV…YFEKWSASML (140 aa). 6 residues coordinate Cu cation: histidine 161, cysteine 196, glutamate 198, cysteine 200, histidine 204, and methionine 207. Glutamate 198 lines the Mg(2+) pocket. The residue at position 218 (tyrosine 218) is a Phosphotyrosine.

It belongs to the cytochrome c oxidase subunit 2 family. Component of the cytochrome c oxidase (complex IV, CIV), a multisubunit enzyme composed of 14 subunits. The complex is composed of a catalytic core of 3 subunits MT-CO1, MT-CO2 and MT-CO3, encoded in the mitochondrial DNA, and 11 supernumerary subunits COX4I, COX5A, COX5B, COX6A, COX6B, COX6C, COX7A, COX7B, COX7C, COX8 and NDUFA4, which are encoded in the nuclear genome. The complex exists as a monomer or a dimer and forms supercomplexes (SCs) in the inner mitochondrial membrane with NADH-ubiquinone oxidoreductase (complex I, CI) and ubiquinol-cytochrome c oxidoreductase (cytochrome b-c1 complex, complex III, CIII), resulting in different assemblies (supercomplex SCI(1)III(2)IV(1) and megacomplex MCI(2)III(2)IV(2)). Found in a complex with TMEM177, COA6, COX18, COX20, SCO1 and SCO2. Interacts with TMEM177 in a COX20-dependent manner. Interacts with COX20. Interacts with COX16. Cu cation is required as a cofactor.

Its subcellular location is the mitochondrion inner membrane. The enzyme catalyses 4 Fe(II)-[cytochrome c] + O2 + 8 H(+)(in) = 4 Fe(III)-[cytochrome c] + 2 H2O + 4 H(+)(out). Functionally, component of the cytochrome c oxidase, the last enzyme in the mitochondrial electron transport chain which drives oxidative phosphorylation. The respiratory chain contains 3 multisubunit complexes succinate dehydrogenase (complex II, CII), ubiquinol-cytochrome c oxidoreductase (cytochrome b-c1 complex, complex III, CIII) and cytochrome c oxidase (complex IV, CIV), that cooperate to transfer electrons derived from NADH and succinate to molecular oxygen, creating an electrochemical gradient over the inner membrane that drives transmembrane transport and the ATP synthase. Cytochrome c oxidase is the component of the respiratory chain that catalyzes the reduction of oxygen to water. Electrons originating from reduced cytochrome c in the intermembrane space (IMS) are transferred via the dinuclear copper A center (CU(A)) of subunit 2 and heme A of subunit 1 to the active site in subunit 1, a binuclear center (BNC) formed by heme A3 and copper B (CU(B)). The BNC reduces molecular oxygen to 2 water molecules using 4 electrons from cytochrome c in the IMS and 4 protons from the mitochondrial matrix. This is Cytochrome c oxidase subunit 2 (MT-CO2) from Capra hircus (Goat).